A 77-amino-acid polypeptide reads, in one-letter code: Conotoxin Lt7.1 (77 aa).

The N-terminal stretch at 1–19 (MEKLTILLLVAALLMSTQG) is a signal peptide. A propeptide spanning residues 20–49 (LIQSGGENRPKEKIKFLSKRKTVAESWWEG) is cleaved from the precursor. Cystine bridges form between Cys51–Cys65, Cys58–Cys69, and Cys64–Cys74.

Belongs to the conotoxin O2 superfamily. In terms of tissue distribution, expressed by the venom duct.

The protein resides in the secreted. The sequence is that of Conotoxin Lt7.1 from Conus litteratus (Lettered cone).